Here is a 401-residue protein sequence, read N- to C-terminus: Glutamyl-tRNA reductase (401 aa).

Substrate-binding positions include 45–48 (TCNR), Ser101, 106–108 (EDQ), and Gln112. Residue Cys46 is the Nucleophile of the active site. Position 177–182 (177–182 (GYGEVG)) interacts with NADP(+).

This sequence belongs to the glutamyl-tRNA reductase family. In terms of assembly, homodimer.

It carries out the reaction (S)-4-amino-5-oxopentanoate + tRNA(Glu) + NADP(+) = L-glutamyl-tRNA(Glu) + NADPH + H(+). It functions in the pathway porphyrin-containing compound metabolism; protoporphyrin-IX biosynthesis; 5-aminolevulinate from L-glutamyl-tRNA(Glu): step 1/2. Its function is as follows. Catalyzes the NADPH-dependent reduction of glutamyl-tRNA(Glu) to glutamate 1-semialdehyde (GSA). This chain is Glutamyl-tRNA reductase, found in Clostridium beijerinckii (strain ATCC 51743 / NCIMB 8052) (Clostridium acetobutylicum).